Reading from the N-terminus, the 545-residue chain is 2-succinyl-5-enolpyruvyl-6-hydroxy-3-cyclohexene-1-carboxylate synthase (545 aa).

Residues 184 to 209 (PLVPDPEPHGAPTPAGRPGGRPWTYT) are disordered. Over residues 195–205 (PTPAGRPGGRP) the composition is skewed to low complexity.

Belongs to the TPP enzyme family. MenD subfamily. As to quaternary structure, homodimer. Mg(2+) serves as cofactor. It depends on Mn(2+) as a cofactor. Thiamine diphosphate is required as a cofactor.

The catalysed reaction is isochorismate + 2-oxoglutarate + H(+) = 5-enolpyruvoyl-6-hydroxy-2-succinyl-cyclohex-3-ene-1-carboxylate + CO2. The protein operates within quinol/quinone metabolism; 1,4-dihydroxy-2-naphthoate biosynthesis; 1,4-dihydroxy-2-naphthoate from chorismate: step 2/7. Its pathway is quinol/quinone metabolism; menaquinone biosynthesis. Its function is as follows. Catalyzes the thiamine diphosphate-dependent decarboxylation of 2-oxoglutarate and the subsequent addition of the resulting succinic semialdehyde-thiamine pyrophosphate anion to isochorismate to yield 2-succinyl-5-enolpyruvyl-6-hydroxy-3-cyclohexene-1-carboxylate (SEPHCHC). In Mycobacterium avium (strain 104), this protein is 2-succinyl-5-enolpyruvyl-6-hydroxy-3-cyclohexene-1-carboxylate synthase.